Reading from the N-terminus, the 336-residue chain is Large ribosomal subunit protein uL1 (336 aa).

Residues 1 to 245 (MANQKKVTNK…VKKTAKGKVI (245 aa)) are large ribosomal subunit protein uL1. The interval 246–336 (ADDSAKGENK…DVKKAKTSKK (91 aa)) is unknown. The tract at residues 267-336 (AQKKKPSKHP…DVKKAKTSKK (70 aa)) is disordered. Positions 286–305 (KKKKVKKILKKAKPAKKAAV) are enriched in basic residues. A compositionally biased stretch (low complexity) spans 306–315 (AKKPVVVNKK).

It belongs to the universal ribosomal protein uL1 family. As to quaternary structure, part of the 50S ribosomal subunit.

Binds directly to 23S rRNA. The L1 stalk is quite mobile in the ribosome, and is involved in E site tRNA release. Functionally, protein L1 is also a translational repressor protein, it controls the translation of the L11 operon by binding to its mRNA. This Malacoplasma penetrans (strain HF-2) (Mycoplasma penetrans) protein is Large ribosomal subunit protein uL1.